A 194-amino-acid chain; its full sequence is Xanthine phosphoribosyltransferase (194 aa).

Xanthine contacts are provided by leucine 20 and asparagine 27. Position 128 to 132 (128 to 132 (ANGQA)) interacts with 5-phospho-alpha-D-ribose 1-diphosphate. Lysine 156 provides a ligand contact to xanthine.

It belongs to the purine/pyrimidine phosphoribosyltransferase family. Xpt subfamily. Homodimer.

The protein localises to the cytoplasm. The catalysed reaction is XMP + diphosphate = xanthine + 5-phospho-alpha-D-ribose 1-diphosphate. The protein operates within purine metabolism; XMP biosynthesis via salvage pathway; XMP from xanthine: step 1/1. Functionally, converts the preformed base xanthine, a product of nucleic acid breakdown, to xanthosine 5'-monophosphate (XMP), so it can be reused for RNA or DNA synthesis. The protein is Xanthine phosphoribosyltransferase of Geobacillus thermodenitrificans (strain NG80-2).